A 156-amino-acid polypeptide reads, in one-letter code: Small ribosomal subunit protein uS7 (156 aa).

Belongs to the universal ribosomal protein uS7 family. Part of the 30S ribosomal subunit. Contacts proteins S9 and S11.

Functionally, one of the primary rRNA binding proteins, it binds directly to 16S rRNA where it nucleates assembly of the head domain of the 30S subunit. Is located at the subunit interface close to the decoding center, probably blocks exit of the E-site tRNA. In Paramagnetospirillum magneticum (strain ATCC 700264 / AMB-1) (Magnetospirillum magneticum), this protein is Small ribosomal subunit protein uS7.